The sequence spans 1364 residues: Serine protease SepA autotransporter (1364 aa).

The N-terminal stretch at 1–56 is a signal peptide; sequence MNKIYYLKYCHITKSLIAVSELARRVTCKSHRRLSRRVILTSVAALSLSSAWPALS. The 251-residue stretch at 57–307 folds into the Peptidase S6 domain; that stretch reads ATVSAEIPYQ…VVTTQDFLGQ (251 aa). Active-site charge relay system residues include H134, D162, and S267. The Autotransporter domain maps to 1098 to 1364; sequence DTQGDAGVWA…AINANFRYVF (267 aa).

In terms of processing, cleaved to release the mature protein from the outer membrane. Cleavage is performed by an unknown protease.

The protein localises to the periplasm. The protein resides in the secreted. It localises to the cell surface. It is found in the cell outer membrane. Its activity is regulated as follows. Inhibited by the serine protease inhibitor PMSF, but not by benzamidine, alpha 1-antitrypsin, alpha 1-antichymotrypsin. Not inhibited by metalloprotease inhibitors such as EDTA and orthophenanthroline. Its function is as follows. Major protein secreted in laboratory media showing proteolytic activity. May be involved in invasion and destruction of host intestinal epithelium. This is Serine protease SepA autotransporter (sepA) from Shigella flexneri.